A 129-amino-acid chain; its full sequence is Large ribosomal subunit protein bL17 (129 aa).

It belongs to the bacterial ribosomal protein bL17 family. In terms of assembly, part of the 50S ribosomal subunit. Contacts protein L32.

The chain is Large ribosomal subunit protein bL17 from Pseudomonas aeruginosa (strain UCBPP-PA14).